We begin with the raw amino-acid sequence, 147 residues long: MGKCRHNGEVSIFGVRPASFPYFPFNLMDRIGGFVILDELWLRRWCEIIEYPMKIPTLYVPIEDYGIPTVEDMDLIVDFIKYHVSNGREVVVSCIGGHGRTGTVLAIWAGLNGVENPIEYVRECYCECAVETEEQEEFVMEYLKKRL.

This sequence to M.jannaschii MJ0215.

This is an uncharacterized protein from Methanocaldococcus jannaschii (strain ATCC 43067 / DSM 2661 / JAL-1 / JCM 10045 / NBRC 100440) (Methanococcus jannaschii).